We begin with the raw amino-acid sequence, 573 residues long: Sulfite reductase [NADPH] hemoprotein beta-component (573 aa).

Residues cysteine 438, cysteine 444, cysteine 483, and cysteine 487 each coordinate [4Fe-4S] cluster. Position 487 (cysteine 487) interacts with siroheme.

Belongs to the nitrite and sulfite reductase 4Fe-4S domain family. In terms of assembly, alpha(8)-beta(8). The alpha component is a flavoprotein, the beta component is a hemoprotein. The cofactor is siroheme. It depends on [4Fe-4S] cluster as a cofactor.

The enzyme catalyses hydrogen sulfide + 3 NADP(+) + 3 H2O = sulfite + 3 NADPH + 4 H(+). It participates in sulfur metabolism; hydrogen sulfide biosynthesis; hydrogen sulfide from sulfite (NADPH route): step 1/1. Functionally, component of the sulfite reductase complex that catalyzes the 6-electron reduction of sulfite to sulfide. This is one of several activities required for the biosynthesis of L-cysteine from sulfate. The polypeptide is Sulfite reductase [NADPH] hemoprotein beta-component (Staphylococcus haemolyticus (strain JCSC1435)).